We begin with the raw amino-acid sequence, 361 residues long: Phosphoserine aminotransferase (361 aa).

Position 42 (R42) interacts with L-glutamate. Residues 76-77 (AR), W102, T153, D173, and Q196 contribute to the pyridoxal 5'-phosphate site. K197 carries the post-translational modification N6-(pyridoxal phosphate)lysine. Residue 238–239 (NT) participates in pyridoxal 5'-phosphate binding.

The protein belongs to the class-V pyridoxal-phosphate-dependent aminotransferase family. SerC subfamily. Homodimer. Pyridoxal 5'-phosphate serves as cofactor.

It is found in the cytoplasm. The catalysed reaction is O-phospho-L-serine + 2-oxoglutarate = 3-phosphooxypyruvate + L-glutamate. It carries out the reaction 4-(phosphooxy)-L-threonine + 2-oxoglutarate = (R)-3-hydroxy-2-oxo-4-phosphooxybutanoate + L-glutamate. It functions in the pathway amino-acid biosynthesis; L-serine biosynthesis; L-serine from 3-phospho-D-glycerate: step 2/3. Its pathway is cofactor biosynthesis; pyridoxine 5'-phosphate biosynthesis; pyridoxine 5'-phosphate from D-erythrose 4-phosphate: step 3/5. In terms of biological role, catalyzes the reversible conversion of 3-phosphohydroxypyruvate to phosphoserine and of 3-hydroxy-2-oxo-4-phosphonooxybutanoate to phosphohydroxythreonine. This chain is Phosphoserine aminotransferase, found in Yersinia pestis (strain Pestoides F).